Here is a 127-residue protein sequence, read N- to C-terminus: Large ribosomal subunit protein bL17 (127 aa).

This sequence belongs to the bacterial ribosomal protein bL17 family. In terms of assembly, part of the 50S ribosomal subunit. Contacts protein L32.

This is Large ribosomal subunit protein bL17 from Haemophilus ducreyi (strain 35000HP / ATCC 700724).